A 420-amino-acid chain; its full sequence is 20-oxo-5-O-mycaminosyltylactone 23-monooxygenase (420 aa).

Residues 1 to 28 (MSSSGDARPSQKGILLPAARANDTDEAA) are disordered. 5 residues coordinate heme: His118, Arg122, Arg311, His367, and Cys369.

Belongs to the cytochrome P450 family.

The enzyme catalyses 20-oxo-5-O-beta-D-mycaminosyltylonolide + 2 reduced [2Fe-2S]-[ferredoxin] + O2 + 2 H(+) = 5-O-beta-D-mycaminosyltylonolide + 2 oxidized [2Fe-2S]-[ferredoxin] + H2O. Its pathway is antibiotic biosynthesis; tylosin biosynthesis. In terms of biological role, involved in the biosynthesis of the complex macrolide antibiotic tylosin. Catalyzes the hydroxylation of 20-oxo-5-O-beta-mycaminosyltylactone at the C-23 position to yield 5-O-beta-mycaminosyltylonolide. The chain is 20-oxo-5-O-mycaminosyltylactone 23-monooxygenase from Streptomyces fradiae (Streptomyces roseoflavus).